A 129-amino-acid polypeptide reads, in one-letter code: Small ribosomal subunit protein uS11 (129 aa).

This sequence belongs to the universal ribosomal protein uS11 family. In terms of assembly, part of the 30S ribosomal subunit. Interacts with proteins S7 and S18. Binds to IF-3.

Its function is as follows. Located on the platform of the 30S subunit, it bridges several disparate RNA helices of the 16S rRNA. Forms part of the Shine-Dalgarno cleft in the 70S ribosome. The polypeptide is Small ribosomal subunit protein uS11 (Bradyrhizobium sp. (strain BTAi1 / ATCC BAA-1182)).